Here is a 118-residue protein sequence, read N- to C-terminus: Large ribosomal subunit protein bL19 (118 aa).

Belongs to the bacterial ribosomal protein bL19 family.

This protein is located at the 30S-50S ribosomal subunit interface and may play a role in the structure and function of the aminoacyl-tRNA binding site. The sequence is that of Large ribosomal subunit protein bL19 from Helicobacter pylori (strain G27).